The primary structure comprises 69 residues: Photosystem I reaction center subunit IV (69 aa).

This sequence belongs to the PsaE family.

It localises to the cellular thylakoid membrane. Stabilizes the interaction between PsaC and the PSI core, assists the docking of the ferredoxin to PSI and interacts with ferredoxin-NADP oxidoreductase. This Prochlorococcus marinus (strain MIT 9515) protein is Photosystem I reaction center subunit IV.